Here is a 288-residue protein sequence, read N- to C-terminus: Small ribosomal subunit protein uS3 (288 aa).

The KH type-2 domain occupies 39–107 (VREYLKAKLK…PVAVNIEEVR (69 aa)). Residues 209–288 (GRNDLPAAET…AAAAADGKGE (80 aa)) are disordered. Positions 219–238 (PRPEEERRPRGPRRDGRPGD) are enriched in basic and acidic residues. The span at 277-288 (APAAAAADGKGE) shows a compositional bias: low complexity.

The protein belongs to the universal ribosomal protein uS3 family. As to quaternary structure, part of the 30S ribosomal subunit. Forms a tight complex with proteins S10 and S14.

Binds the lower part of the 30S subunit head. Binds mRNA in the 70S ribosome, positioning it for translation. This Acidovorax sp. (strain JS42) protein is Small ribosomal subunit protein uS3.